The primary structure comprises 426 residues: Formyl-CoA:oxalate CoA-transferase (426 aa).

CoA-binding positions include 17 to 18 (QS), Arg-38, 72 to 75 (LDTK), 96 to 98 (NFG), Arg-104, and 136 to 139 (KVYE). The active-site Nucleophile is Asp-168. Substrate is bound at residue 247–249 (GGQ).

This sequence belongs to the CoA-transferase III family. Frc subfamily. In terms of assembly, homodimer.

It carries out the reaction formyl-CoA + oxalate = oxalyl-CoA + formate. Its pathway is metabolic intermediate degradation; oxalate degradation; CO(2) and formate from oxalate: step 1/2. Its function is as follows. Involved in the catabolism of oxalate and in the adapatation to low pH via the induction of the oxalate-dependent acid tolerance response (ATR). Catalyzes the transfer of the CoA moiety from formyl-CoA to oxalate. In Rhodopseudomonas palustris (strain BisB18), this protein is Formyl-CoA:oxalate CoA-transferase.